A 617-amino-acid chain; its full sequence is Dihydroxy-acid dehydratase (617 aa).

Aspartate 81 lines the Mg(2+) pocket. Residue cysteine 122 participates in [2Fe-2S] cluster binding. Mg(2+) is bound by residues aspartate 123 and lysine 124. Residue lysine 124 is modified to N6-carboxylysine. Residue cysteine 195 participates in [2Fe-2S] cluster binding. Glutamate 491 is a binding site for Mg(2+). The Proton acceptor role is filled by serine 517.

This sequence belongs to the IlvD/Edd family. In terms of assembly, homodimer. [2Fe-2S] cluster is required as a cofactor. It depends on Mg(2+) as a cofactor.

The enzyme catalyses (2R)-2,3-dihydroxy-3-methylbutanoate = 3-methyl-2-oxobutanoate + H2O. It catalyses the reaction (2R,3R)-2,3-dihydroxy-3-methylpentanoate = (S)-3-methyl-2-oxopentanoate + H2O. It functions in the pathway amino-acid biosynthesis; L-isoleucine biosynthesis; L-isoleucine from 2-oxobutanoate: step 3/4. Its pathway is amino-acid biosynthesis; L-valine biosynthesis; L-valine from pyruvate: step 3/4. Functions in the biosynthesis of branched-chain amino acids. Catalyzes the dehydration of (2R,3R)-2,3-dihydroxy-3-methylpentanoate (2,3-dihydroxy-3-methylvalerate) into 2-oxo-3-methylpentanoate (2-oxo-3-methylvalerate) and of (2R)-2,3-dihydroxy-3-methylbutanoate (2,3-dihydroxyisovalerate) into 2-oxo-3-methylbutanoate (2-oxoisovalerate), the penultimate precursor to L-isoleucine and L-valine, respectively. The polypeptide is Dihydroxy-acid dehydratase (Hydrogenovibrio crunogenus (strain DSM 25203 / XCL-2) (Thiomicrospira crunogena)).